The chain runs to 737 residues: Protein-glucosylgalactosylhydroxylysine glucosidase (737 aa).

300–301 (WD) contacts substrate. The active-site Proton donor is glutamate 430. 498–499 (KQ) lines the substrate pocket. A disordered region spans residues 681–737 (RSAGRIQMSPPKLPGSSSSEFPGRTFSDVRDPLQSPLWVTLGSSSPTESLTVDPASE). Residues 721–730 (LGSSSPTESL) are compositionally biased toward polar residues.

This sequence belongs to the glycosyl hydrolase 65 family.

The catalysed reaction is (5R)-5-O-[alpha-D-glucosyl-(1-&gt;2)-beta-D-galactosyl]-5-hydroxy-L-lysyl-[collagen] + H2O = (5R)-5-O-(beta-D-galactosyl)-5-hydroxy-L-lysyl-[collagen] + D-glucose. Its function is as follows. Catalyzes the hydrolysis of glucose from the disaccharide unit linked to hydroxylysine residues of collagen and collagen-like proteins. This is Protein-glucosylgalactosylhydroxylysine glucosidase from Homo sapiens (Human).